A 130-amino-acid chain; its full sequence is Histone H2A type 1-F (130 aa).

A disordered region spans residues 1–22 (MSGRGKQGGKARAKAKTRSSRA). Residue serine 2 is modified to Phosphoserine; by RPS6KA5. Residue arginine 4 is modified to Citrulline; alternate. Residue arginine 4 is modified to Symmetric dimethylarginine; by PRMT5; alternate. Residues lysine 6 and lysine 10 each carry the N6-(2-hydroxyisobutyryl)lysine modification. A compositionally biased stretch (basic residues) spans 7–19 (QGGKARAKAKTRS). Lysine 10 is subject to N6-lactoyllysine; alternate. The residue at position 37 (lysine 37) is an N6-(2-hydroxyisobutyryl)lysine; alternate. At lysine 37 the chain carries N6-(beta-hydroxybutyryl)lysine; alternate. An N6-crotonyllysine; alternate modification is found at lysine 37. Residues lysine 75, lysine 76, and lysine 96 each carry the N6-(2-hydroxyisobutyryl)lysine modification. Lysine 96 carries the N6-glutaryllysine; alternate modification. Residue glutamine 105 is modified to N5-methylglutamine. Lysine 119 carries the post-translational modification N6-(2-hydroxyisobutyryl)lysine; alternate. Lysine 119 and lysine 120 each carry N6-crotonyllysine; alternate. Lysine 119 and lysine 120 each carry N6-glutaryllysine; alternate. Lysine 120 is covalently cross-linked (Glycyl lysine isopeptide (Lys-Gly) (interchain with G-Cter in ubiquitin); alternate). Residue threonine 121 is modified to Phosphothreonine; by DCAF1. Lysine 126 carries the N6-crotonyllysine; alternate modification. Lysine 126 is subject to N6-glutaryllysine; alternate.

Belongs to the histone H2A family. As to quaternary structure, the nucleosome is a histone octamer containing two molecules each of H2A, H2B, H3 and H4 assembled in one H3-H4 heterotetramer and two H2A-H2B heterodimers. The octamer wraps approximately 147 bp of DNA. In terms of processing, deiminated on Arg-4 in granulocytes upon calcium entry. Post-translationally, monoubiquitination of Lys-120 (H2AK119Ub) by RING1, TRIM37 and RNF2/RING2 complex gives a specific tag for epigenetic transcriptional repression and participates in X chromosome inactivation of female mammals. It is involved in the initiation of both imprinted and random X inactivation. Ubiquitinated H2A is enriched in inactive X chromosome chromatin. Ubiquitination of H2A functions downstream of methylation of 'Lys-27' of histone H3 (H3K27me). H2AK119Ub by RNF2/RING2 can also be induced by ultraviolet and may be involved in DNA repair. Following DNA double-strand breaks (DSBs), it is ubiquitinated through 'Lys-63' linkage of ubiquitin moieties by the E2 ligase UBE2N and the E3 ligases RNF8 and RNF168, leading to the recruitment of repair proteins to sites of DNA damage. Ubiquitination at Lys-14 and Lys-16 (H2AK13Ub and H2AK15Ub, respectively) in response to DNA damage is initiated by RNF168 that mediates monoubiquitination at these 2 sites, and 'Lys-63'-linked ubiquitin are then conjugated to monoubiquitin; RNF8 is able to extend 'Lys-63'-linked ubiquitin chains in vitro. H2AK119Ub and ionizing radiation-induced 'Lys-63'-linked ubiquitination (H2AK13Ub and H2AK15Ub) are distinct events. Phosphorylation on Ser-2 (H2AS1ph) is enhanced during mitosis. Phosphorylation on Ser-2 by RPS6KA5/MSK1 directly represses transcription. Acetylation of H3 inhibits Ser-2 phosphorylation by RPS6KA5/MSK1. Phosphorylation at Thr-121 (H2AT120ph) by DCAF1 is present in the regulatory region of many tumor suppresor genes and down-regulates their transcription. In terms of processing, symmetric dimethylation on Arg-4 by the PRDM1/PRMT5 complex may play a crucial role in the germ-cell lineage. Post-translationally, glutamine methylation at Gln-105 (H2AQ104me) by FBL is specifically dedicated to polymerase I. It is present at 35S ribosomal DNA locus and impairs binding of the FACT complex. Crotonylation (Kcr) is specifically present in male germ cells and marks testis-specific genes in post-meiotic cells, including X-linked genes that escape sex chromosome inactivation in haploid cells. Crotonylation marks active promoters and enhancers and confers resistance to transcriptional repressors. It is also associated with post-meiotically activated genes on autosomes. In terms of processing, lactylated in macrophages by EP300/P300 by using lactoyl-CoA directly derived from endogenous or exogenous lactate, leading to stimulates gene transcription.

The protein resides in the nucleus. It localises to the chromosome. In terms of biological role, core component of nucleosome. Nucleosomes wrap and compact DNA into chromatin, limiting DNA accessibility to the cellular machineries which require DNA as a template. Histones thereby play a central role in transcription regulation, DNA repair, DNA replication and chromosomal stability. DNA accessibility is regulated via a complex set of post-translational modifications of histones, also called histone code, and nucleosome remodeling. This chain is Histone H2A type 1-F, found in Rattus norvegicus (Rat).